Reading from the N-terminus, the 347-residue chain is D-alanine--D-alanine ligase (347 aa).

The ATP-grasp domain occupies 131 to 333 (KRVLESAGIA…YPELIERLVD (203 aa)). 161–216 (EEKLAYPVFTKPSNMGSSVGISKSENQEELRPALELAFRYDSRVLVEQGVNAREIE) lines the ATP pocket. The Mg(2+) site is built by Asp287, Glu300, and Asn302.

The protein belongs to the D-alanine--D-alanine ligase family. Requires Mg(2+) as cofactor. The cofactor is Mn(2+).

It localises to the cytoplasm. The enzyme catalyses 2 D-alanine + ATP = D-alanyl-D-alanine + ADP + phosphate + H(+). It participates in cell wall biogenesis; peptidoglycan biosynthesis. Cell wall formation. The sequence is that of D-alanine--D-alanine ligase from Streptococcus pneumoniae (strain Taiwan19F-14).